Here is a 503-residue protein sequence, read N- to C-terminus: Sarpagan bridge enzyme 1 (503 aa).

A helical; Signal-anchor for type II membrane protein transmembrane segment spans residues 3–23 (ISVTTSIALATIVFFLYKLAT). C442 contributes to the heme binding site.

Belongs to the cytochrome P450 family. It depends on heme as a cofactor. As to expression, highly expressed in roots. Expressed at low levels in leaves, stems and flowers.

The protein localises to the endoplasmic reticulum membrane. It catalyses the reaction (19E)-geissoschizine + reduced [NADPH--hemoprotein reductase] + O2 = polyneuridine aldehyde + oxidized [NADPH--hemoprotein reductase] + 2 H2O + H(+). The catalysed reaction is tetrahydroalstonine + A + reduced [NADPH--hemoprotein reductase] + O2 = alstonine + AH2 + oxidized [NADPH--hemoprotein reductase] + 2 H2O + H(+). The enzyme catalyses ajmalicine + A + reduced [NADPH--hemoprotein reductase] + O2 = serpentine + AH2 + oxidized [NADPH--hemoprotein reductase] + 2 H2O + H(+). Its pathway is alkaloid biosynthesis; ajmaline biosynthesis. Its function is as follows. Monooxygenase involved in the biosynthesis of ajmaline-type monoterpenoid indole alkaloids (MIAs) natural products, important plant-derived pharmaceuticals used in the therapy of heart disorders. Converts by cyclization the strictosidine-derived geissoschizine to the sarpagan alkaloid polyneuridine aldehyde, precursor of vomilenine, an intermediate chemical in the biosynthesis of ajmaline. Converts by aromatization the tetrahydro-beta-carboline alkaloids tetrahydroalstonine and ajmalicine to the corresponding beta-carboline alkaloids alstonine and serpentine, respectively. This is Sarpagan bridge enzyme 1 from Rauvolfia serpentina (Serpentine wood).